We begin with the raw amino-acid sequence, 406 residues long: Collagen and calcium-binding EGF domain-containing protein 1 (406 aa).

Positions 1–34 (MVPPPPSRGGAARGQLGRSLGPLLLLLALGHTWT) are cleaved as a signal peptide. In terms of domain architecture, EGF-like; calcium-binding spans 134 to 175 (DIDECASSNGTLCAHICINTLGSYRCECREGYIREDDGKTCT). 3 disulfide bridges follow: Cys138–Cys150, Cys146–Cys159, and Cys161–Cys174. Asn142 carries an N-linked (GlcNAc...) asparagine glycan. Asn182 is a glycosylation site (N-linked (GlcNAc...) asparagine). 2 disordered regions span residues 244–335 (YLPG…PGSF) and 360–406 (RTHS…DFYP). Collagen-like domains are found at residues 245–290 (LPGP…PMGP) and 300–333 (GRRG…GPPG). Residues 270-279 (PGMPGPPGQP) show a composition bias toward pro residues. Residues 281-292 (PRGSMGPMGPSP) are compositionally biased toward low complexity. An O-linked (Xyl...) (chondroitin sulfate) serine glycan is attached at Ser385. Basic and acidic residues predominate over residues 386 to 406 (GDDHPRRTETRDLRAPRDFYP).

The protein belongs to the CCBE1 family. In terms of tissue distribution, detected in fibroblasts and urine (at protein level). Not expressed in blood or lymphatic endothelial cells.

It is found in the secreted. Required for lymphangioblast budding and angiogenic sprouting from venous endothelium during embryogenesis. The sequence is that of Collagen and calcium-binding EGF domain-containing protein 1 (CCBE1) from Homo sapiens (Human).